A 257-amino-acid polypeptide reads, in one-letter code: Imidazole glycerol phosphate synthase subunit HisF (257 aa).

Active-site residues include Asp-12 and Asp-131.

The protein belongs to the HisA/HisF family. In terms of assembly, heterodimer of HisH and HisF.

Its subcellular location is the cytoplasm. It carries out the reaction 5-[(5-phospho-1-deoxy-D-ribulos-1-ylimino)methylamino]-1-(5-phospho-beta-D-ribosyl)imidazole-4-carboxamide + L-glutamine = D-erythro-1-(imidazol-4-yl)glycerol 3-phosphate + 5-amino-1-(5-phospho-beta-D-ribosyl)imidazole-4-carboxamide + L-glutamate + H(+). Its pathway is amino-acid biosynthesis; L-histidine biosynthesis; L-histidine from 5-phospho-alpha-D-ribose 1-diphosphate: step 5/9. Functionally, IGPS catalyzes the conversion of PRFAR and glutamine to IGP, AICAR and glutamate. The HisF subunit catalyzes the cyclization activity that produces IGP and AICAR from PRFAR using the ammonia provided by the HisH subunit. The polypeptide is Imidazole glycerol phosphate synthase subunit HisF (Burkholderia vietnamiensis (strain G4 / LMG 22486) (Burkholderia cepacia (strain R1808))).